We begin with the raw amino-acid sequence, 524 residues long: Hydroxysteroid dehydrogenase-like protein 2 (524 aa).

Residues 17-23 (GASRGIG), K42, and D74 contribute to the NADP(+) site. The residue at position 42 (K42) is an N6-(2-hydroxyisobutyryl)lysine. N6-acetyllysine is present on K116. The active-site Proton acceptor is the Y168. K172 contacts NADP(+). The span at 283-300 (EEKESYDPVPEVKEEKLQ) shows a compositional bias: basic and acidic residues. The disordered stretch occupies residues 283–410 (EEKESYDPVP…PLLQSVLPPK (128 aa)). Over residues 301-391 (LQEQPQLQEQ…QQQPQQRPQQ (91 aa)) the composition is skewed to low complexity. The SCP2 domain occupies 414–521 (GAVEETFRIV…KLEKLMTHMN (108 aa)). K424 is subject to N6-succinyllysine.

The protein belongs to the short-chain dehydrogenases/reductases (SDR) family.

The protein localises to the peroxisome. It is found in the mitochondrion. Functionally, has apparently no steroid dehydrogenase activity. Controls bile acid (BA) and lipid metabolism in response to nutritional cues. In Rattus norvegicus (Rat), this protein is Hydroxysteroid dehydrogenase-like protein 2 (Hsdl2).